The following is a 584-amino-acid chain: uncharacterized protein (584 aa).

The helical transmembrane segment at 15 to 35 threads the bilayer; that stretch reads FIFFVLVFFICIIFGCIYESL. Composition is skewed to polar residues over residues 184–194 and 204–225; these read DVSTENSYTHN and GKRTYNNQSNNNLPYDNSSYNI. Residues 184-226 are disordered; that stretch reads DVSTENSYTHNNSRDDEPQNGKRTYNNQSNNNLPYDNSSYNIS. Coiled-coil stretches lie at residues 267–319 and 436–477; these read DNYP…DNYP and RDNH…HYKR.

The protein resides in the membrane. This is an uncharacterized protein from Plasmodium falciparum (isolate 3D7).